We begin with the raw amino-acid sequence, 663 residues long: Leishmanolysin-like peptidase (663 aa).

Residue His-246 participates in Zn(2+) binding. Glu-247 is an active-site residue. The Zn(2+) site is built by His-250 and His-353.

Belongs to the peptidase M8 family. It depends on Zn(2+) as a cofactor.

Its subcellular location is the cytoplasm. Metalloprotease. This Caenorhabditis briggsae protein is Leishmanolysin-like peptidase.